The sequence spans 163 residues: SsrA-binding protein (163 aa).

Belongs to the SmpB family.

The protein localises to the cytoplasm. Required for rescue of stalled ribosomes mediated by trans-translation. Binds to transfer-messenger RNA (tmRNA), required for stable association of tmRNA with ribosomes. tmRNA and SmpB together mimic tRNA shape, replacing the anticodon stem-loop with SmpB. tmRNA is encoded by the ssrA gene; the 2 termini fold to resemble tRNA(Ala) and it encodes a 'tag peptide', a short internal open reading frame. During trans-translation Ala-aminoacylated tmRNA acts like a tRNA, entering the A-site of stalled ribosomes, displacing the stalled mRNA. The ribosome then switches to translate the ORF on the tmRNA; the nascent peptide is terminated with the 'tag peptide' encoded by the tmRNA and targeted for degradation. The ribosome is freed to recommence translation, which seems to be the essential function of trans-translation. The polypeptide is SsrA-binding protein (Shewanella sp. (strain ANA-3)).